Reading from the N-terminus, the 310-residue chain is Olfactory receptor 4K14 (310 aa).

Residues 1 to 25 (MDPQNYSLVSEFVLHGLCTSRHLQN) lie on the Extracellular side of the membrane. N-linked (GlcNAc...) asparagine glycosylation occurs at Asn-5. Residues 26–49 (FFFIFFFGVYVAIMLGNLLILVTV) traverse the membrane as a helical segment. Topologically, residues 50–58 (ISDPCLHSS) are cytoplasmic. A helical membrane pass occupies residues 59–80 (PMYFLLGNLAFLDMWLASFATP). Topologically, residues 81-101 (KMIRDFLSDQKLISFGGCMAQ) are extracellular. A disulfide bridge connects residues Cys-98 and Cys-190. A helical transmembrane segment spans residues 102 to 121 (IFFLHFTGGAEMVLLVSMAY). Residues 122-140 (DRYVAICKPLHYMTLMSWQ) lie on the Cytoplasmic side of the membrane. A helical membrane pass occupies residues 141 to 159 (TCIRLVLASWVVGFVHSIS). Residues 160-196 (QVAFTVNLPYCGPNEVDSFFCDLPLVIKLACMDTYVL) are Extracellular-facing. The chain crosses the membrane as a helical span at residues 197–220 (GIIMISDSGLLSLSCFLLLLISYT). Residues 221-236 (VILLAIRQRAAGSTSK) lie on the Cytoplasmic side of the membrane. The helical transmembrane segment at 237–259 (ALSTCSAHIMVVTLFFGPCIFVY) threads the bilayer. The Extracellular portion of the chain corresponds to 260 to 270 (VRPFSRFSVDK). A helical transmembrane segment spans residues 271–290 (LLSVFYTIFTPLLNPIIYTL). Residues 291-310 (RNEEMKAAMKKLQNRRVTFQ) are Cytoplasmic-facing.

This sequence belongs to the G-protein coupled receptor 1 family.

The protein localises to the cell membrane. Its function is as follows. Odorant receptor. This Homo sapiens (Human) protein is Olfactory receptor 4K14 (OR4K14).